Consider the following 94-residue polypeptide: MFTINAEVRKEQGKGASRRLRHANKFPAIVYGGTEAPVAIELDHDKVMNMQAKPEFYSEVLTLAIDGKEVKVKVQAVQRHPYKPKLHHIDFVRA.

The protein belongs to the bacterial ribosomal protein bL25 family. As to quaternary structure, part of the 50S ribosomal subunit; part of the 5S rRNA/L5/L18/L25 subcomplex. Contacts the 5S rRNA. Binds to the 5S rRNA independently of L5 and L18.

Its function is as follows. This is one of the proteins that binds to the 5S RNA in the ribosome where it forms part of the central protuberance. This chain is Large ribosomal subunit protein bL25, found in Cronobacter sakazakii (strain ATCC BAA-894) (Enterobacter sakazakii).